The following is a 77-amino-acid chain: Metallothionein-like protein 2 (77 aa).

Belongs to the metallothionein superfamily. Type 15 family.

In terms of biological role, metallothioneins have a high content of cysteine residues that bind various heavy metals. This Trifolium repens (Creeping white clover) protein is Metallothionein-like protein 2 (MT1A).